We begin with the raw amino-acid sequence, 353 residues long: S-adenosylmethionine:tRNA ribosyltransferase-isomerase (353 aa).

Belongs to the QueA family. As to quaternary structure, monomer.

It localises to the cytoplasm. The catalysed reaction is 7-aminomethyl-7-carbaguanosine(34) in tRNA + S-adenosyl-L-methionine = epoxyqueuosine(34) in tRNA + adenine + L-methionine + 2 H(+). It functions in the pathway tRNA modification; tRNA-queuosine biosynthesis. Its function is as follows. Transfers and isomerizes the ribose moiety from AdoMet to the 7-aminomethyl group of 7-deazaguanine (preQ1-tRNA) to give epoxyqueuosine (oQ-tRNA). This chain is S-adenosylmethionine:tRNA ribosyltransferase-isomerase, found in Rickettsia bellii (strain RML369-C).